A 240-amino-acid chain; its full sequence is MSGRRPTLLVFCDSLSYYGPRGGLPADDPRIWPNIVASQLDWDVELIGRVGWTSRDVWWAATQDPRAWAALPRAGAVIFATGGMDSLPSPLPTALRELIRYIRPPWLRRRVRDLYGWLQPRLSPVSRNALPPHLTAEYLEMTRGAIDFNRPGIPVVAALPSVHIADSYGRAHHGREATARAITEWARQHGVVLVDLKAAVADQVLNGRGNPDGIHWNFEAHQAVAELMLKALAEAGVPCR.

Belongs to the OctT acyltransferase family. As to quaternary structure, homotetramer.

The catalysed reaction is (2R)-2-O-[alpha-D-glucopyranosyl-(1-&gt;6)-alpha-D-glucopyranosyl]-glycerate + octanoyl-CoA = (2R)-2-O-[6-O-octanoyl-alpha-D-glucopyranosyl-(1-&gt;6)-alpha-D-glucopyranosyl]-glycerate + CoA. In terms of biological role, sugar octanoyltransferase likely involved in the biosynthesis of mycobacterial methylglucose lipopolysaccharide (MGLP). Catalyzes the transfer of an octanoyl group from octanoyl-CoA to the C6 OH of the second glucose in diglucosylglycerate (DGG). Can also use hexanoyl-CoA as acyl donor in vitro. DGG is the preferred acceptor, but to a lesser extent, GG (glucosylglycerate) can be used as substrate. DGG and GG are the two earliest intermediates in MGLP biosynthesis. This Mycolicibacterium hassiacum (strain DSM 44199 / CIP 105218 / JCM 12690 / 3849) (Mycobacterium hassiacum) protein is Diglucosylglycerate octanoyltransferase.